The chain runs to 160 residues: Small ribosomal subunit protein bS6 (160 aa).

Basic and acidic residues-rich tracts occupy residues 94 to 119 (EEHEEGPSAMMRKADRDRERDDRGGR) and 125 to 152 (RGDREGRGDREGGGFRGDRGPRRPREDA). The tract at residues 94–160 (EEHEEGPSAM…DADTAAASEE (67 aa)) is disordered.

Belongs to the bacterial ribosomal protein bS6 family.

Binds together with bS18 to 16S ribosomal RNA. The protein is Small ribosomal subunit protein bS6 of Rhodopseudomonas palustris (strain BisB5).